A 416-amino-acid chain; its full sequence is Histidinol dehydrogenase (416 aa).

Residues Tyr117, Gln178, and Asn201 each coordinate NAD(+). 3 residues coordinate substrate: Thr224, Gln246, and His249. 2 residues coordinate Zn(2+): Gln246 and His249. Active-site proton acceptor residues include Glu314 and His315. The substrate site is built by His315, Asp348, Glu402, and His407. Asp348 is a Zn(2+) binding site. Residue His407 coordinates Zn(2+).

This sequence belongs to the histidinol dehydrogenase family. The cofactor is Zn(2+).

The catalysed reaction is L-histidinol + 2 NAD(+) + H2O = L-histidine + 2 NADH + 3 H(+). It participates in amino-acid biosynthesis; L-histidine biosynthesis; L-histidine from 5-phospho-alpha-D-ribose 1-diphosphate: step 9/9. Its function is as follows. Catalyzes the sequential NAD-dependent oxidations of L-histidinol to L-histidinaldehyde and then to L-histidine. This chain is Histidinol dehydrogenase, found in Staphylococcus aureus (strain Mu50 / ATCC 700699).